The following is a 292-amino-acid chain: Tetrahydromethanopterin:alpha-L-glutamate ligase (292 aa).

The region spanning 103 to 286 (SFLMEVHKIP…IAQNLIDEAL (184 aa)) is the ATP-grasp domain. ATP-binding positions include Lys-138, 176-188 (QEFV…VYRD), and Arg-204. Mg(2+)-binding residues include Asp-247, Glu-259, and Asn-261. Residues Asp-247, Glu-259, and Asn-261 each coordinate Mn(2+).

The protein belongs to the RimK family. MptN subfamily. In terms of assembly, homodimer. Mg(2+) is required as a cofactor. It depends on Mn(2+) as a cofactor.

The catalysed reaction is 5,6,7,8-tetrahydromethanopterin + L-glutamate + ATP = 5,6,7,8-tetrahydrosarcinapterin + ADP + phosphate + H(+). It participates in cofactor biosynthesis; 5,6,7,8-tetrahydrosarcinapterin biosynthesis. In terms of biological role, catalyzes the ATP or GTP-dependent addition of one L-glutamate molecule to tetrahydromethanopterin, producing tetrahydrosarcinapterin. The protein is Tetrahydromethanopterin:alpha-L-glutamate ligase (mptN) of Methanococcus maripaludis (strain DSM 14266 / JCM 13030 / NBRC 101832 / S2 / LL).